A 337-amino-acid polypeptide reads, in one-letter code: Alanine racemase (337 aa).

K33 acts as the Proton acceptor; specific for D-alanine in catalysis. The residue at position 33 (K33) is an N6-(pyridoxal phosphate)lysine. Substrate is bound at residue R118. Y246 acts as the Proton acceptor; specific for L-alanine in catalysis. M292 contacts substrate.

The protein belongs to the alanine racemase family. Pyridoxal 5'-phosphate is required as a cofactor.

The enzyme catalyses L-alanine = D-alanine. Its pathway is amino-acid biosynthesis; D-alanine biosynthesis; D-alanine from L-alanine: step 1/1. Functionally, catalyzes the interconversion of L-alanine and D-alanine. May also act on other amino acids. In Campylobacter concisus (strain 13826), this protein is Alanine racemase (alr).